We begin with the raw amino-acid sequence, 35 residues long: Photosystem II reaction center protein T (35 aa).

A helical transmembrane segment spans residues 3–23; sequence ALVYTFLLVSTLGIIFFAIFF.

Belongs to the PsbT family. PSII is composed of 1 copy each of membrane proteins PsbA, PsbB, PsbC, PsbD, PsbE, PsbF, PsbH, PsbI, PsbJ, PsbK, PsbL, PsbM, PsbT, PsbY, PsbZ, Psb30/Ycf12, at least 3 peripheral proteins of the oxygen-evolving complex and a large number of cofactors. It forms dimeric complexes.

The protein localises to the plastid. The protein resides in the chloroplast thylakoid membrane. Its function is as follows. Found at the monomer-monomer interface of the photosystem II (PS II) dimer, plays a role in assembly and dimerization of PSII. PSII is a light-driven water plastoquinone oxidoreductase, using light energy to abstract electrons from H(2)O, generating a proton gradient subsequently used for ATP formation. The chain is Photosystem II reaction center protein T from Stangeria eriopus (Natal grass cycad).